The sequence spans 273 residues: Torsin-1A (273 aa).

An interaction with SNAPIN region spans residues 45 to 205 (KPKKPLTLSL…VSVFNNKNSG (161 aa)). 56–63 (GWTGTGKN) contributes to the ATP binding site. Asn97 and Asn112 each carry an N-linked (GlcNAc...) asparagine glycan.

This sequence belongs to the ClpA/ClpB family. Torsin subfamily. In terms of assembly, homohexamer. Interacts with TOR1B; the interaction may be specific of neural tissues. Interacts (ATP-bound) with TOR1AIP1 and TOR1AIP2; the interactions induce ATPase activity. Interacts with KLHL14; preferentially when ATP-free. Interacts with KLC1 (via TPR repeats); the interaction associates TOR1A with the kinesin oligomeric complex. Interacts with COPS4; the interaction associates TOR1A with the CSN complex. Interacts with SNAPIN; the interaction is direct and associates SNAPIN with the CSN complex. Interacts with STON2. Interacts (ATP-bound) with SYNE3 (via KASH domain); the interaction is required for SYNE3 nuclear envelope localization. Interacts with VIM; the interaction associates TOR1A with the cytoskeleton. Interacts with PLEC. Interacts (ATP-bound) with SLC6A3; regulates SLC6A3 transport to the plasma membrane. N-glycosylated.

It localises to the endoplasmic reticulum lumen. The protein resides in the nucleus membrane. Its subcellular location is the cell projection. The protein localises to the growth cone. It is found in the cytoplasmic vesicle membrane. It localises to the synapse. The protein resides in the synaptosome. Its subcellular location is the cytoplasm. The protein localises to the cytoskeleton. The catalysed reaction is ATP + H2O = ADP + phosphate + H(+). Protein with chaperone functions important for the control of protein folding, processing, stability and localization as well as for the reduction of misfolded protein aggregates. Involved in the regulation of synaptic vesicle recycling, controls STON2 protein stability in collaboration with the COP9 signalosome complex (CSN). In the nucleus, may link the cytoskeleton with the nuclear envelope, this mechanism seems to be crucial for the control of nuclear polarity, cell movement and, specifically in neurons, nuclear envelope integrity. Participates in the cellular trafficking and may regulate the subcellular location of multipass membrane proteins such as the dopamine transporter SLC6A3, leading to the modulation of dopamine neurotransmission. In the endoplasmic reticulum, plays a role in the quality control of protein folding by increasing clearance of misfolded proteins such as SGCE variants or holding them in an intermediate state for proper refolding. May have a redundant function with TOR1B in non-neural tissues. The chain is Torsin-1A (TOR1A) from Cricetus cricetus (Black-bellied hamster).